The primary structure comprises 311 residues: Homeobox-leucine zipper protein HOX1 (311 aa).

2 disordered regions span residues alanine 29 to arginine 69 and alanine 97 to arginine 160. Low complexity predominate over residues serine 119–alanine 145. The segment at residues glycine 154–glutamine 213 is a DNA-binding region (homeobox). Residues lysine 212–histidine 256 are leucine-zipper. Positions serine 279 to alanine 311 are disordered. A compositionally biased stretch (polar residues) spans alanine 280–glycine 289. A compositionally biased stretch (pro residues) spans arginine 294–proline 303.

This sequence belongs to the HD-ZIP homeobox family. Class II subfamily. As to quaternary structure, homodimer. May form a heterodimer with HOX2, HOX3 or HOX7. In terms of tissue distribution, expressed in root provascular and vascular cylinder, provascular and vascular strands of leaves, provascular and vascular strands of the whole panicle, in mature embryo provascular bundles of scutellum and embryonic axis and provascular and vascular strands of young immature spikelet organs. Expressed in differentiating and differentiated xylem and phloem elements, and in outer and inner bundle sheath cells of all vascular bundles. Expressed in auricles, ligules, culm, guard cells brac hairs and pollen.

It is found in the nucleus. Its function is as follows. Probable transcription repressor involved leaf development. Binds to the DNA sequence 5'-CAAT[GC]ATTG-3'. May act as a regulatory switch to specify provascular cell fate. This Oryza sativa subsp. indica (Rice) protein is Homeobox-leucine zipper protein HOX1 (HOX1).